The sequence spans 404 residues: Glycerol-1-phosphate dehydrogenase [NAD(P)+] (404 aa).

NAD(+) contacts are provided by residues D55, 117–121, and 139–142; these read GTVHD and TAPS. D144 is a binding site for substrate. NAD(+) is bound at residue S148. Residue D191 participates in substrate binding. Ni(2+) contacts are provided by D191 and H271. H275 is a binding site for substrate. Residue H291 participates in Ni(2+) binding.

Belongs to the glycerol-1-phosphate dehydrogenase family. In terms of assembly, homodimer. Ni(2+) serves as cofactor.

It localises to the cytoplasm. It carries out the reaction sn-glycerol 1-phosphate + NAD(+) = dihydroxyacetone phosphate + NADH + H(+). It catalyses the reaction sn-glycerol 1-phosphate + NADP(+) = dihydroxyacetone phosphate + NADPH + H(+). Functionally, catalyzes the NAD(P)H-dependent reduction of dihydroxyacetonephosphate (DHAP or glycerone phosphate) to glycerol 1-phosphate (G1P). The G1P thus generated is probably used for the synthesis of phosphoglycerolipids in Gram-positive bacterial species. The chain is Glycerol-1-phosphate dehydrogenase [NAD(P)+] from Geobacillus thermodenitrificans (strain NG80-2).